The sequence spans 263 residues: Probable HTH-type transcriptional regulator ArcR (263 aa).

Positions 14 to 74 (ITSVLNAVEI…DGDGTYQLGD (61 aa)) constitute an HTH iclR-type domain. Residues 35-54 (LQELTTELDLTKATIHTYMA) constitute a DNA-binding region (H-T-H motif). The IclR-ED domain maps to 89-262 (LYRLGREEID…ANIIEVRLET (174 aa)).

Functionally, probably regulates transcription of the arcABC operon. In Halobacterium salinarum (strain ATCC 29341 / DSM 671 / R1), this protein is Probable HTH-type transcriptional regulator ArcR (arcR).